Here is a 304-residue protein sequence, read N- to C-terminus: Aspartate carbamoyltransferase catalytic subunit (304 aa).

Carbamoyl phosphate contacts are provided by Arg49 and Thr50. Lys77 is a binding site for L-aspartate. Residues Arg99, His127, and Gln130 each contribute to the carbamoyl phosphate site. L-aspartate-binding residues include Arg160 and Arg211. The carbamoyl phosphate site is built by Ala250 and Pro251. Phosphoserine is present on Ser303.

The protein belongs to the aspartate/ornithine carbamoyltransferase superfamily. ATCase family. In terms of assembly, heterododecamer (2C3:3R2) of six catalytic PyrB chains organized as two trimers (C3), and six regulatory PyrI chains organized as three dimers (R2).

The enzyme catalyses carbamoyl phosphate + L-aspartate = N-carbamoyl-L-aspartate + phosphate + H(+). The protein operates within pyrimidine metabolism; UMP biosynthesis via de novo pathway; (S)-dihydroorotate from bicarbonate: step 2/3. Its function is as follows. Catalyzes the condensation of carbamoyl phosphate and aspartate to form carbamoyl aspartate and inorganic phosphate, the committed step in the de novo pyrimidine nucleotide biosynthesis pathway. The protein is Aspartate carbamoyltransferase catalytic subunit of Bacillus subtilis (strain 168).